The chain runs to 165 residues: Calcium-binding protein H (165 aa).

4 consecutive EF-hand domains span residues 7-42 (QIEK…MGSK), 43-78 (YPEK…RYQD), 88-123 (YFQD…IGSD), and 124-159 (HPKE…TIRS). Ca(2+)-binding residues include Asp20, Asp22, Asn24, Glu26, Glu31, Asp56, Asp58, Glu60, Lys62, Glu67, Asp101, Asn103, Asp105, Arg107, Glu112, Asp137, Asn139, Asp141, Tyr143, and Glu148.

The polypeptide is Calcium-binding protein H (cbpH) (Dictyostelium discoideum (Social amoeba)).